A 63-amino-acid polypeptide reads, in one-letter code: Large ribosomal subunit protein uL29 (63 aa).

This sequence belongs to the universal ribosomal protein uL29 family.

This chain is Large ribosomal subunit protein uL29, found in Salmonella agona (strain SL483).